Here is a 512-residue protein sequence, read N- to C-terminus: ETS translocation variant 3 (512 aa).

A DNA-binding region (ETS) is located at residues 35-116 (IQLWHFILEL…KGKRFTYKFN (82 aa)). A disordered region spans residues 136 to 222 (VPQSAPPVPT…NAIGGGGIGH (87 aa)). Residues Ser139, Ser159, and Ser315 each carry the phosphoserine modification. Residues 158-184 (HSPTNDVQPGRFSASSLTASGQESSNG) are compositionally biased toward polar residues. The tract at residues 336–512 (PEESTQFSIK…QGLATAAADA (177 aa)) is disordered. Composition is skewed to basic and acidic residues over residues 380 to 406 (IKVE…HTQE), 453 to 468 (DRPG…KEDA), and 479 to 491 (RWND…ELSK). Lys381 is covalently cross-linked (Glycyl lysine isopeptide (Lys-Gly) (interchain with G-Cter in SUMO2)). Lys388 bears the N6-acetyllysine; alternate mark. Residue Lys388 forms a Glycyl lysine isopeptide (Lys-Gly) (interchain with G-Cter in SUMO2); alternate linkage.

It belongs to the ETS family.

Its subcellular location is the nucleus. Transcriptional repressor that contribute to growth arrest during terminal macrophage differentiation by repressing target genes involved in Ras-dependent proliferation. Represses MMP1 promoter activity. This Homo sapiens (Human) protein is ETS translocation variant 3 (ETV3).